A 97-amino-acid chain; its full sequence is Co-chaperonin GroES (97 aa).

Belongs to the GroES chaperonin family. As to quaternary structure, heptamer of 7 subunits arranged in a ring. Interacts with the chaperonin GroEL.

It is found in the cytoplasm. Together with the chaperonin GroEL, plays an essential role in assisting protein folding. The GroEL-GroES system forms a nano-cage that allows encapsulation of the non-native substrate proteins and provides a physical environment optimized to promote and accelerate protein folding. GroES binds to the apical surface of the GroEL ring, thereby capping the opening of the GroEL channel. This chain is Co-chaperonin GroES, found in Pseudomonas putida (strain GB-1).